The primary structure comprises 61 residues: Small ribosomal subunit protein uS14B (61 aa).

Positions 24, 27, 40, and 43 each coordinate Zn(2+).

It belongs to the universal ribosomal protein uS14 family. Zinc-binding uS14 subfamily. In terms of assembly, part of the 30S ribosomal subunit. Contacts proteins S3 and S10. It depends on Zn(2+) as a cofactor.

Binds 16S rRNA, required for the assembly of 30S particles and may also be responsible for determining the conformation of the 16S rRNA at the A site. This is Small ribosomal subunit protein uS14B from Rhodococcus jostii (strain RHA1).